The chain runs to 628 residues: Modular serine protease (628 aa).

The first 25 residues, 1–25, serve as a signal peptide directing secretion; that stretch reads MQLISFLSNPLFFCALLLKFRTIFA. LDL-receptor class A domains lie at 26-64, 69-107, 122-163, and 166-204; these read ACDSSQFECDNGSCISQYDVCNGEKNCPDGSDETALTCV, HCTKPYFQCTYGACVIGTAGCNGVNECADGSDETRLRCG, NCKE…ELCG, and ECPAYSFKCGTGGCISGSLSCNGENDCYDGSDEAPLLCN. 12 disulfide bridges follow: Cys-27/Cys-39, Cys-34/Cys-52, Cys-46/Cys-63, Cys-70/Cys-82, Cys-77/Cys-95, Cys-89/Cys-106, Cys-123/Cys-135, Cys-130/Cys-149, Cys-143/Cys-162, Cys-167/Cys-179, Cys-174/Cys-192, and Cys-186/Cys-203. N-linked (GlcNAc...) asparagine glycosylation is present at Asn-36. Residue Asn-204 is glycosylated (N-linked (GlcNAc...) asparagine). 2 consecutive Sushi domains span residues 222-285 and 300-356; these read LGCP…KCVK and ALCT…RCEQ. Disulfide bonds link Cys-224–Cys-270, Cys-256–Cys-283, Cys-302–Cys-341, and Cys-326–Cys-354. In terms of domain architecture, Peptidase S1 spans 369-621; it reads SSGGYTINNT…FEDMILNAMN (253 aa). Asn-376 is a glycosylation site (N-linked (GlcNAc...) asparagine). Cys-399 and Cys-415 are disulfide-bonded. Active-site charge relay system residues include His-414, Asp-472, and Ser-563. Asn-621 carries an N-linked (GlcNAc...) asparagine glycan.

It belongs to the peptidase S1 family. In terms of processing, may be proteolytically cleaved via an autocatalytic mechanism.

The protein localises to the secreted. Its function is as follows. Serine protease that plays a key role in innate immunity by activating the Toll pathway in response to infection with Gram-positive bacteria and fungi. During Gram-positive infection, acts downstream of PGRP-SA and upstream of Grass and Spz, and therefore appears to function in a pathway that links detection of Gram-positive lysine-type peptidoglycans to Toll activation. Functions in a separate pathway to the psh-mediated activation of the Toll pathway. This is Modular serine protease from Drosophila melanogaster (Fruit fly).